Consider the following 618-residue polypeptide: 1-deoxy-D-xylulose-5-phosphate synthase (618 aa).

Thiamine diphosphate-binding positions include His-70 and 111-113 (GHS). Asp-142 is a Mg(2+) binding site. Thiamine diphosphate is bound by residues 143–144 (GS), Asn-171, Tyr-278, and Glu-360. Asn-171 serves as a coordination point for Mg(2+).

This sequence belongs to the transketolase family. DXPS subfamily. Homodimer. Mg(2+) serves as cofactor. Thiamine diphosphate is required as a cofactor.

The catalysed reaction is D-glyceraldehyde 3-phosphate + pyruvate + H(+) = 1-deoxy-D-xylulose 5-phosphate + CO2. The protein operates within metabolic intermediate biosynthesis; 1-deoxy-D-xylulose 5-phosphate biosynthesis; 1-deoxy-D-xylulose 5-phosphate from D-glyceraldehyde 3-phosphate and pyruvate: step 1/1. Catalyzes the acyloin condensation reaction between C atoms 2 and 3 of pyruvate and glyceraldehyde 3-phosphate to yield 1-deoxy-D-xylulose-5-phosphate (DXP). The polypeptide is 1-deoxy-D-xylulose-5-phosphate synthase (Helicobacter pylori (strain ATCC 700392 / 26695) (Campylobacter pylori)).